The following is a 209-amino-acid chain: Thiamine-phosphate synthase (209 aa).

4-amino-2-methyl-5-(diphosphooxymethyl)pyrimidine is bound by residues 38 to 42 (QYRDK) and N70. Mg(2+) contacts are provided by D71 and D89. T108 provides a ligand contact to 4-amino-2-methyl-5-(diphosphooxymethyl)pyrimidine. Residue 135-137 (SNT) coordinates 2-[(2R,5Z)-2-carboxy-4-methylthiazol-5(2H)-ylidene]ethyl phosphate. K138 is a binding site for 4-amino-2-methyl-5-(diphosphooxymethyl)pyrimidine. Position 165 (G165) interacts with 2-[(2R,5Z)-2-carboxy-4-methylthiazol-5(2H)-ylidene]ethyl phosphate.

The protein belongs to the thiamine-phosphate synthase family. Requires Mg(2+) as cofactor.

It carries out the reaction 2-[(2R,5Z)-2-carboxy-4-methylthiazol-5(2H)-ylidene]ethyl phosphate + 4-amino-2-methyl-5-(diphosphooxymethyl)pyrimidine + 2 H(+) = thiamine phosphate + CO2 + diphosphate. The catalysed reaction is 2-(2-carboxy-4-methylthiazol-5-yl)ethyl phosphate + 4-amino-2-methyl-5-(diphosphooxymethyl)pyrimidine + 2 H(+) = thiamine phosphate + CO2 + diphosphate. The enzyme catalyses 4-methyl-5-(2-phosphooxyethyl)-thiazole + 4-amino-2-methyl-5-(diphosphooxymethyl)pyrimidine + H(+) = thiamine phosphate + diphosphate. It functions in the pathway cofactor biosynthesis; thiamine diphosphate biosynthesis; thiamine phosphate from 4-amino-2-methyl-5-diphosphomethylpyrimidine and 4-methyl-5-(2-phosphoethyl)-thiazole: step 1/1. In terms of biological role, condenses 4-methyl-5-(beta-hydroxyethyl)thiazole monophosphate (THZ-P) and 2-methyl-4-amino-5-hydroxymethyl pyrimidine pyrophosphate (HMP-PP) to form thiamine monophosphate (TMP). The chain is Thiamine-phosphate synthase from Ectopseudomonas mendocina (strain ymp) (Pseudomonas mendocina).